Consider the following 335-residue polypeptide: Karyogamy protein KAR4 (335 aa).

The segment at 1–25 is disordered; that stretch reads MAFQDPTYDQNKSRHINNSHLQGPN. The segment covering 16 to 25 has biased composition (polar residues); the sequence is INNSHLQGPN.

It belongs to the MT-A70-like family. Component of the MIS (mRNA N6-methyladenosine (m6A) methylation) complex, at least composed of IME4, KAR4, MUM2, SLZ1, and VIR1. Interacts with VIR1.

The protein resides in the nucleus. It is found in the cytoplasm. Component of the MIS complex, a complex that mediates N6-methyladenosine (m6A) methylation of meiotic mRNAs and is required for initiation of meiosis, progression through the meiotic divisions and sporulation. May assist STE12 in the pheromone-dependent expression of KAR3 and CIK1. The chain is Karyogamy protein KAR4 (KAR4) from Saccharomyces cerevisiae (strain ATCC 204508 / S288c) (Baker's yeast).